A 464-amino-acid chain; its full sequence is E3 ubiquitin-protein ligase ITT1 (464 aa).

A TRIAD supradomain region spans residues 176–455; that stretch reads SNYHCCICME…EAYSGCYGRL (280 aa). Positions 180, 183, 207, 210, 290, 300, 316, 319, 402, and 405 each coordinate Zn(2+). An RING-type 1 zinc finger spans residues 180-236; that stretch reads CCICMEMEKGVRMIKLPCENANVEHYLCRGCAKSYFTAMIQENRISSVRCPQCEYKE. The IBR-type zinc finger occupies 267–338; sequence DTELCERYEK…HAWHGYNNKC (72 aa). The RING-type 2; atypical zinc-finger motif lies at 402 to 431; the sequence is CPKCKVVVERSEGCNKMKCEVCGTLFCFIC. Cys-415 is a catalytic residue. Residues Cys-420, Cys-423, Cys-428, Cys-431, His-443, and Cys-451 each coordinate Zn(2+).

Belongs to the RBR family. RNF14 subfamily. In terms of assembly, interacts with translation release factors eRF1 (SUP45) and eRF3 (SUP35) in vitro.

It catalyses the reaction [E2 ubiquitin-conjugating enzyme]-S-ubiquitinyl-L-cysteine + [acceptor protein]-L-lysine = [E2 ubiquitin-conjugating enzyme]-L-cysteine + [acceptor protein]-N(6)-ubiquitinyl-L-lysine.. The protein operates within protein modification; protein ubiquitination. In terms of biological role, E3 ubiquitin-protein ligase involved in translation quality control. Involved in the rescue of stalled ribosomes by promoting ubiquitination and degradation of proteins on stalled ribosomes. Specifically required to resolve RNA-protein cross-links caused by reactive aldehydes, which trigger translation stress by stalling ribosomes: acts by catalying 'Lys-6'-linked ubiquitination of RNA-protein cross-links, leading to their degradation. Interacts with the translation termination factors eRF1 (SUP45) and eRF3 (SUP35); overexpression decreases the efficiency of translation termination. This chain is E3 ubiquitin-protein ligase ITT1, found in Saccharomyces cerevisiae (strain ATCC 204508 / S288c) (Baker's yeast).